A 121-amino-acid chain; its full sequence is Prismalin-14 (121 aa).

The first 16 residues, 1-16 (MRSLLVLLALAACASA), serve as a signal peptide directing secretion. Q17 is subject to Pyrrolidone carboxylic acid. A run of 4 repeats spans residues 48–51 (PIYR), 52–55 (PIYR), 56–59 (PIYY), and 60–63 (PQII). Positions 48–63 (PIYRPIYRPIYYPQII) are 4 X 4 AA approximate tandem repeats of P-I-Y-R.

Expressed only at the mantle edge where it is found predominantly in the inner side of the outer mantle fold.

Functionally, displays inhibitory activity against calcium carbonate precipitation, binds calcium and affects crystallization of calcium carbonate in vitro. May be involved in calcification of the prismatic layer of the shell. This is Prismalin-14 from Pinctada fucata (Akoya pearl oyster).